We begin with the raw amino-acid sequence, 37 residues long: Large ribosomal subunit protein bL36 (37 aa).

This sequence belongs to the bacterial ribosomal protein bL36 family.

This chain is Large ribosomal subunit protein bL36, found in Mycoplasma genitalium (strain ATCC 33530 / DSM 19775 / NCTC 10195 / G37) (Mycoplasmoides genitalium).